Consider the following 230-residue polypeptide: Flagellar L-ring protein (230 aa).

The signal sequence occupies residues 1-21 (MMLKTVLRLPVCAALLALAAG). Residue Cys22 is the site of N-palmitoyl cysteine attachment. Residue Cys22 is the site of S-diacylglycerol cysteine attachment. The interval 34–53 (PLTAPPPPPPQPSARPNGSI) is disordered. Positions 36-46 (TAPPPPPPQPS) are enriched in pro residues.

This sequence belongs to the FlgH family. In terms of assembly, the basal body constitutes a major portion of the flagellar organelle and consists of four rings (L,P,S, and M) mounted on a central rod.

Its subcellular location is the cell outer membrane. The protein resides in the bacterial flagellum basal body. Its function is as follows. Assembles around the rod to form the L-ring and probably protects the motor/basal body from shearing forces during rotation. The chain is Flagellar L-ring protein from Bordetella parapertussis (strain 12822 / ATCC BAA-587 / NCTC 13253).